The primary structure comprises 304 residues: Acetyl-coenzyme A carboxylase carboxyl transferase subunit beta (304 aa).

The region spanning 25 to 294 (VWTKCDSCGQ…PSVVESKADT (270 aa)) is the CoA carboxyltransferase N-terminal domain. Cys-29, Cys-32, Cys-48, and Cys-51 together coordinate Zn(2+). The segment at 29–51 (CDSCGQVLYRAELERNLEVCPKC) adopts a C4-type zinc-finger fold.

This sequence belongs to the AccD/PCCB family. In terms of assembly, acetyl-CoA carboxylase is a heterohexamer composed of biotin carboxyl carrier protein (AccB), biotin carboxylase (AccC) and two subunits each of ACCase subunit alpha (AccA) and ACCase subunit beta (AccD). The cofactor is Zn(2+).

It is found in the cytoplasm. The catalysed reaction is N(6)-carboxybiotinyl-L-lysyl-[protein] + acetyl-CoA = N(6)-biotinyl-L-lysyl-[protein] + malonyl-CoA. It participates in lipid metabolism; malonyl-CoA biosynthesis; malonyl-CoA from acetyl-CoA: step 1/1. Functionally, component of the acetyl coenzyme A carboxylase (ACC) complex. Biotin carboxylase (BC) catalyzes the carboxylation of biotin on its carrier protein (BCCP) and then the CO(2) group is transferred by the transcarboxylase to acetyl-CoA to form malonyl-CoA. In Yersinia pestis (strain Pestoides F), this protein is Acetyl-coenzyme A carboxylase carboxyl transferase subunit beta.